Reading from the N-terminus, the 411-residue chain is Mitotic apparatus protein p62 (411 aa).

Acidic residues-rich tracts occupy residues 134 to 156 (AYEVGDEDLEDEDEGEEDEEEEE), 183 to 201 (ELDEDEDDDEEEEEEEEEI), and 246 to 321 (DDDE…EEDS). Residues 134-378 (AYEVGDEDLE…KSPSKPKKEE (245 aa)) are disordered. The segment covering 351–367 (GMKEKKTYSLEDMKQDL) has biased composition (basic and acidic residues).

The protein belongs to the nucleoplasmin family. Post-translationally, phosphorylated by CaM-kinase II in vitro.

The protein resides in the nucleus. Functionally, required for mitotic progression. Binds to chromatin. The chain is Mitotic apparatus protein p62 from Lytechinus pictus (Painted sea urchin).